Reading from the N-terminus, the 747-residue chain is Catalase-peroxidase (747 aa).

Positions 1–27 are cleaved as a signal peptide; the sequence is MRKFSVSKVALLAATMAPALLPAAARA. A cross-link (tryptophyl-tyrosyl-methioninium (Trp-Tyr) (with M-264)) is located at residues 116-238; it reads WHSAGTYRTA…LAAVQMGLIY (123 aa). H117 acts as the Proton acceptor in catalysis. The tryptophyl-tyrosyl-methioninium (Tyr-Met) (with W-116) cross-link spans 238-264; the sequence is YVNPEGPNGNPDPLLAAKDIRETFGRM. Position 279 (H279) interacts with heme b.

Belongs to the peroxidase family. Peroxidase/catalase subfamily. Homodimer or homotetramer. Requires heme b as cofactor. Post-translationally, formation of the three residue Trp-Tyr-Met cross-link is important for the catalase, but not the peroxidase activity of the enzyme.

The enzyme catalyses H2O2 + AH2 = A + 2 H2O. The catalysed reaction is 2 H2O2 = O2 + 2 H2O. Bifunctional enzyme with both catalase and broad-spectrum peroxidase activity. The sequence is that of Catalase-peroxidase from Novosphingobium aromaticivorans (strain ATCC 700278 / DSM 12444 / CCUG 56034 / CIP 105152 / NBRC 16084 / F199).